A 181-amino-acid chain; its full sequence is UPF0397 protein str0306 (181 aa).

A run of 5 helical transmembrane segments spans residues 11 to 31, 45 to 65, 72 to 92, 109 to 129, and 147 to 167; these read ATGIGAALFIIIGMFVNIPIF, LFSVIFGPITGFFMGFIGHAL, GNISWAWVLASGITGLVIGLF, IWFNLAQALGLLIAYGVVTPI, and FVAGVANFITIAIGGTLLLAI.

This sequence belongs to the UPF0397 family.

Its subcellular location is the cell membrane. This Streptococcus thermophilus (strain CNRZ 1066) protein is UPF0397 protein str0306.